The sequence spans 29 residues: Cytochrome c oxidase subunit 7A2, mitochondrial (29 aa).

Lys-10 is modified (N6-acetyllysine).

Belongs to the cytochrome c oxidase VIIa family. As to quaternary structure, component of the cytochrome c oxidase (complex IV, CIV), a multisubunit enzyme composed of 14 subunits. The complex is composed of a catalytic core of 3 subunits MT-CO1, MT-CO2 and MT-CO3, encoded in the mitochondrial DNA, and 11 supernumerary subunits COX4I, COX5A, COX5B, COX6A, COX6B, COX6C, COX7A, COX7B, COX7C, COX8 and NDUFA4, which are encoded in the nuclear genome. The complex exists as a monomer or a dimer and forms supercomplexes (SCs) in the inner mitochondrial membrane with NADH-ubiquinone oxidoreductase (complex I, CI) and ubiquinol-cytochrome c oxidoreductase (cytochrome b-c1 complex, complex III, CIII), resulting in different assemblies (supercomplex SCI(1)III(2)IV(1) and megacomplex MCI(2)III(2)IV(2)). Interacts with PET100.

Its subcellular location is the mitochondrion inner membrane. The protein operates within energy metabolism; oxidative phosphorylation. Its function is as follows. Component of the cytochrome c oxidase, the last enzyme in the mitochondrial electron transport chain which drives oxidative phosphorylation. The respiratory chain contains 3 multisubunit complexes succinate dehydrogenase (complex II, CII), ubiquinol-cytochrome c oxidoreductase (cytochrome b-c1 complex, complex III, CIII) and cytochrome c oxidase (complex IV, CIV), that cooperate to transfer electrons derived from NADH and succinate to molecular oxygen, creating an electrochemical gradient over the inner membrane that drives transmembrane transport and the ATP synthase. Cytochrome c oxidase is the component of the respiratory chain that catalyzes the reduction of oxygen to water. Electrons originating from reduced cytochrome c in the intermembrane space (IMS) are transferred via the dinuclear copper A center (CU(A)) of subunit 2 and heme A of subunit 1 to the active site in subunit 1, a binuclear center (BNC) formed by heme A3 and copper B (CU(B)). The BNC reduces molecular oxygen to 2 water molecules using 4 electrons from cytochrome c in the IMS and 4 protons from the mitochondrial matrix. This chain is Cytochrome c oxidase subunit 7A2, mitochondrial (COX7A2), found in Canis lupus familiaris (Dog).